We begin with the raw amino-acid sequence, 139 residues long: Heavy metal-associated isoprenylated plant protein 13 (139 aa).

The region spanning 3–70 (PMKAVLQLSI…LCNTELVSVE (68 aa)) is the HMA domain. Positions 70-94 (EVVKPPEKKPEPEKPAPPKPAPAPA) are disordered. Positions 73 to 85 (KPPEKKPEPEKPA) are enriched in basic and acidic residues. A Cysteine methyl ester modification is found at Cys136. The S-farnesyl cysteine moiety is linked to residue Cys136. A propeptide spans 137-139 (VIM) (removed in mature form).

It belongs to the HIPP family.

Functionally, probable heavy-metal-binding protein. This Arabidopsis thaliana (Mouse-ear cress) protein is Heavy metal-associated isoprenylated plant protein 13.